A 431-amino-acid chain; its full sequence is MIDSLDLVIDTIVAREVLDSRGNPTVEAEVLLEAGAIGRAIVPSGASTGAHEAHELRDGDSRYMGKGVTKAVNHIEDRIAPALCGISSLDQASVDGTMQELDGSDNKSSLGANAILAVSMATARAAANGLGLPLYRYLGGPMASLLPVPLMNVINGGAHAANNLDFQEFMLVPHGASTFRESLRMGAEVFHTLKGLLSAQGLSTAVGDEGGFAPNLTNNDAAGDLLIQAIEKAGYSPGKDISLALDVASTEFYKDGCYAFGGGSYTSTEMVNELEKLVDRYPIISIEDGLAEDDWQGWALLTKKLGKRIQLIGDDIFVTSTKRLQQGIDQNVANSILIKVNQIGSLTETLQAIDLAGRSGYTSVISHRSGETEDTTIADLAVATRAGQIKTGSLSRSERVAKYNQLLRIEDELGTQALYAGATGQGPRGRS.

Position 167 (Q167) interacts with (2R)-2-phosphoglycerate. E209 functions as the Proton donor in the catalytic mechanism. Residues D246, E287, and D314 each contribute to the Mg(2+) site. (2R)-2-phosphoglycerate is bound by residues K339, R368, S369, and K390. The active-site Proton acceptor is K339.

This sequence belongs to the enolase family. The cofactor is Mg(2+).

The protein localises to the cytoplasm. It localises to the secreted. The protein resides in the cell surface. It catalyses the reaction (2R)-2-phosphoglycerate = phosphoenolpyruvate + H2O. Its pathway is carbohydrate degradation; glycolysis; pyruvate from D-glyceraldehyde 3-phosphate: step 4/5. Functionally, catalyzes the reversible conversion of 2-phosphoglycerate (2-PG) into phosphoenolpyruvate (PEP). It is essential for the degradation of carbohydrates via glycolysis. This is Enolase from Prochlorococcus marinus (strain MIT 9303).